We begin with the raw amino-acid sequence, 481 residues long: 5-hydroxytryptamine receptor 2B (481 aa).

Residues 1 to 56 (MALSYRVSELQSTIPEHILQSTFVHVISSNWSGLQTESIPEEMKQIVEEQGNKLHW) are Extracellular-facing. A glycan (N-linked (GlcNAc...) asparagine) is linked at asparagine 30. The helical transmembrane segment at 57–79 (AALLILMVIIPTIGGNTLVILAV) threads the bilayer. Topologically, residues 80–90 (SLEKKLQYATN) are cytoplasmic. The chain crosses the membrane as a helical span at residues 91 to 113 (YFLMSLAVADLLVGLFVMPIALL). Topologically, residues 114 to 129 (TIMFEAMWPLPLVLCP) are extracellular. Cysteines 128 and 207 form a disulfide. Residues 130–151 (AWLFLDVLFSTASIMHLCAISV) traverse the membrane as a helical segment. Positions 135 and 140 each coordinate ergotamine. Positions 152 to 154 (DRY) match the DRY motif; important for ligand-induced conformation changes motif. The Cytoplasmic portion of the chain corresponds to 152–171 (DRYIAIKKPIQANQYNSRAT). Residues 172–192 (AFIKITVVWLISIGIAIPVPI) traverse the membrane as a helical segment. Residues 193–216 (KGIETDVDNPNNITCVLTKERFGD) are Extracellular-facing. Leucine 209 is a binding site for ergotamine. The [DE]RFG motif; may stabilize a conformation that preferentially activates signaling via beta-arrestin family members signature appears at 212–215 (ERFG). A helical transmembrane segment spans residues 217-239 (FMLFGSLAAFFTPLAIMIVTYFL). Residues 240–324 (TIHALQKKAY…TISNEQRASK (85 aa)) lie on the Cytoplasmic side of the membrane. Residues 325 to 345 (VLGIVFFLFLLMWCPFFITNI) form a helical membrane-spanning segment. Residues 346–360 (TLVLCDSCNQTTLQM) lie on the Extracellular side of the membrane. A disulfide bridge links cysteine 350 with cysteine 353. Residues 361 to 382 (LLEIFVWIGYVSSGVNPLVYTL) traverse the membrane as a helical segment. An NPxxY motif; important for ligand-induced conformation changes and signaling motif is present at residues 376-380 (NPLVY). The Cytoplasmic segment spans residues 383-481 (FNKTFRDAFG…DKTEEQVSYV (99 aa)). The S-palmitoyl cysteine moiety is linked to residue cysteine 397. A PDZ-binding motif is present at residues 479–481 (SYV).

It belongs to the G-protein coupled receptor 1 family. As to quaternary structure, interacts (via C-terminus) with MPDZ. In terms of tissue distribution, ubiquitous. Detected in liver, kidney, heart, pulmonary artery, and intestine. Detected at lower levels in blood, placenta and brain, especially in cerebellum, occipital cortex and frontal cortex.

Its subcellular location is the cell membrane. The protein localises to the synapse. It is found in the synaptosome. G-protein coupled receptor for 5-hydroxytryptamine (serotonin). Also functions as a receptor for various ergot alkaloid derivatives and psychoactive substances. Ligand binding causes a conformation change that triggers signaling via guanine nucleotide-binding proteins (G proteins) and modulates the activity of downstream effectors. HTR2B is coupled to G(q)/G(11) G alpha proteins and activates phospholipase C-beta, releasing diacylglycerol (DAG) and inositol 1,4,5-trisphosphate (IP3) second messengers that modulate the activity of phosphatidylinositol 3-kinase and promote the release of Ca(2+) ions from intracellular stores, respectively. Beta-arrestin family members inhibit signaling via G proteins and mediate activation of alternative signaling pathways. Plays a role in the regulation of dopamine and 5-hydroxytryptamine release, 5-hydroxytryptamine uptake and in the regulation of extracellular dopamine and 5-hydroxytryptamine levels, and thereby affects neural activity. May play a role in the perception of pain. Plays a role in the regulation of behavior, including impulsive behavior. Required for normal proliferation of embryonic cardiac myocytes and normal heart development. Protects cardiomyocytes against apoptosis. Plays a role in the adaptation of pulmonary arteries to chronic hypoxia. Plays a role in vasoconstriction. Required for normal osteoblast function and proliferation, and for maintaining normal bone density. Required for normal proliferation of the interstitial cells of Cajal in the intestine. The polypeptide is 5-hydroxytryptamine receptor 2B (Homo sapiens (Human)).